Consider the following 431-residue polypeptide: Histidine--tRNA ligase (431 aa).

Belongs to the class-II aminoacyl-tRNA synthetase family. As to quaternary structure, homodimer.

The protein resides in the cytoplasm. It carries out the reaction tRNA(His) + L-histidine + ATP = L-histidyl-tRNA(His) + AMP + diphosphate + H(+). The chain is Histidine--tRNA ligase from Neisseria meningitidis serogroup B (strain ATCC BAA-335 / MC58).